A 591-amino-acid chain; its full sequence is MLILNGFSSATLALITPPFLPKGGKALSQSGPDGLASITLPLPISAERGFAPALALPYSSGGGNGPFGVGWSCATMSIARRTSHGVPQYNDSDEFLGPDGEVLVQTLSTGDAPNPVTCFAYGDVSFPQSYTVTRYQPRTESSFYRLEYWVGNSNGDDFWLLHDSNGILHLLGKTAAARLSDPQAASHTAQWLVEESVTPAGEHIYYSYLAENGDNVDLNGNEAGRDRSAMRYLSKVQYGNATPAADLYLWTSATPAVQWLFTLVFDYGERGVDPQVPPAFTAQNSWLARQDPFSLYNYGFEIRLLRLCRQVLMFHHFPDELGEADTLVSRLLLEYDENPIRTQLCAARTLAYEGDGYRRAPVNNMMPPPPPPPMMGGNSSRPKSKWAIVEESKQIQALRYYSAQGYSVINKYLRGDDYPETQAKETLLSRDYLSTNEPSDEEFKNAMSVYINDIAEGLSSLPETDHRVVYRGLKLDKPALSDVLKEYTTIVNIIIDKAFMSTSPDKAWINDTILNIYLEKGHKGRILGDVAHFKGEAEMLFPPNTKLKIESIVNCGSQDFASQLSKLRLSDDATADTNRIKRIINMRVLNS.

The TR mART core domain occupies 373–576 (PMMGGNSSRP…LRLSDDATAD (204 aa)). NAD(+)-binding positions include R414 and 471-477 (RGLKLDK). Catalysis depends on residues R471, S501, and E538. Residue E538 coordinates NAD(+).

Belongs to the SpvB family.

The protein localises to the secreted. The catalysed reaction is L-arginyl-[protein] + NAD(+) = N(omega)-(ADP-D-ribosyl)-L-arginyl-[protein] + nicotinamide + H(+). With respect to regulation, inhibited by novobiocin. Its function is as follows. Mono-ADP-ribosylates eukaryotic muscle and non-muscle actin on 'Arg-177'. ADP-ribosylates all actins tested, has more activity on nonmuscle beta/gamma-actin than on muscle alpha-actin. Prefers monomeric G-actin but can weakly ADP-ribosylate F-actin. ADP-ribosylation prevents the polymerization of G-actin to F-actin, causing actin filament depolymerization, destruction of the cytoskeleton and cytotoxicity. Does not possess NAD(+)-glycohydrolase activity, unlike most mART enzymes. This is Mono(ADP-ribosyl)transferase SpvB (spvB) from Salmonella typhimurium.